The chain runs to 262 residues: Small ribosomal subunit protein eS1 (262 aa).

Belongs to the eukaryotic ribosomal protein eS1 family. In terms of assembly, component of the small ribosomal subunit. Mature ribosomes consist of a small (40S) and a large (60S) subunit. The 40S subunit contains about 33 different proteins and 1 molecule of RNA (18S). The 60S subunit contains about 49 different proteins and 3 molecules of RNA (25S, 5.8S and 5S).

It is found in the cytoplasm. In Theileria annulata, this protein is Small ribosomal subunit protein eS1.